Here is a 327-residue protein sequence, read N- to C-terminus: Endochitinase CH5B (327 aa).

The signal sequence occupies residues M1 to G26. A Chitin-binding type-1 domain is found at E27–G67. 7 disulfide bridges follow: C29/C44, C38/C50, C43/C57, C61/C65, C96/C158, C169/C177, and C276/C308. E140 acts as the Proton donor in catalysis. A propeptide spans S317–Q327 (removed in mature form).

The protein belongs to the glycosyl hydrolase 19 family. Chitinase class I subfamily.

The protein resides in the vacuole. The catalysed reaction is Random endo-hydrolysis of N-acetyl-beta-D-glucosaminide (1-&gt;4)-beta-linkages in chitin and chitodextrins.. Functionally, defense against chitin-containing fungal pathogens. This chain is Endochitinase CH5B, found in Phaseolus vulgaris (Kidney bean).